A 382-amino-acid chain; its full sequence is Galactokinase (382 aa).

34 to 37 (EHTD) contacts substrate. Residue 124–130 (GAGLSSS) participates in ATP binding. Positions 130 and 162 each coordinate Mg(2+). Aspartate 174 acts as the Proton acceptor in catalysis. Tyrosine 223 lines the substrate pocket.

This sequence belongs to the GHMP kinase family. GalK subfamily.

The protein resides in the cytoplasm. The enzyme catalyses alpha-D-galactose + ATP = alpha-D-galactose 1-phosphate + ADP + H(+). The protein operates within carbohydrate metabolism; galactose metabolism. Its function is as follows. Catalyzes the transfer of the gamma-phosphate of ATP to D-galactose to form alpha-D-galactose-1-phosphate (Gal-1-P). This is Galactokinase from Shigella flexneri.